The primary structure comprises 212 residues: Protein ERP5 (212 aa).

A signal peptide spans methionine 1–glycine 20. Over alanine 21–serine 178 the chain is Lumenal. One can recognise a GOLD domain in the interval threonine 31–isoleucine 124. N-linked (GlcNAc...) asparagine glycosylation is present at asparagine 171. The helical transmembrane segment at lysine 179–leucine 199 threads the bilayer. Residues arginine 200–valine 212 are Cytoplasmic-facing.

Belongs to the EMP24/GP25L family.

It localises to the endoplasmic reticulum membrane. Its function is as follows. Involved in vesicular protein trafficking. The chain is Protein ERP5 (ERP5) from Saccharomyces cerevisiae (strain ATCC 204508 / S288c) (Baker's yeast).